The primary structure comprises 465 residues: Argininosuccinate lyase (465 aa).

The protein belongs to the lyase 1 family. Argininosuccinate lyase subfamily.

The protein resides in the cytoplasm. It carries out the reaction 2-(N(omega)-L-arginino)succinate = fumarate + L-arginine. It participates in amino-acid biosynthesis; L-arginine biosynthesis; L-arginine from L-ornithine and carbamoyl phosphate: step 3/3. This is Argininosuccinate lyase from Nitrobacter winogradskyi (strain ATCC 25391 / DSM 10237 / CIP 104748 / NCIMB 11846 / Nb-255).